Consider the following 262-residue polypeptide: Ninja-family protein 3 (262 aa).

Residues 48 to 69 (RRNSLTCNTSKEAAGQSPEEMN) form a disordered region.

The protein belongs to the Ninja family.

It localises to the nucleus. This Zea mays (Maize) protein is Ninja-family protein 3.